Reading from the N-terminus, the 454-residue chain is Repulsive guidance molecule A (454 aa).

The N-terminal stretch at 1–47 is a signal peptide; the sequence is MQPPRERLVVTGRAGWMGMGRGAGRSALGLWPTLAFLLCSFPAAISP. Positions 48 to 169 are cleaved as a propeptide — removed in mature form; sequence CKILKCNSEF…NYTHCGLFGD (122 aa). Residues 114 to 126 are compositionally biased toward polar residues; the sequence is HNCSKDGPTSQPR. Residues 114–141 form a disordered region; it reads HNCSKDGPTSQPRVRTLPPAGDSQERSD. N-linked (GlcNAc...) asparagine glycans are attached at residues asparagine 115 and asparagine 160. Disulfide bonds link cysteine 146/cysteine 227 and cysteine 164/cysteine 316. Asparagine 388 is a glycosylation site (N-linked (GlcNAc...) asparagine). Residue alanine 427 is the site of GPI-anchor amidated alanine attachment. Residues 428–454 constitute a propeptide, removed in mature form; it reads AAATTFPLAPQILLGTIPLLVLLPVLW.

It belongs to the repulsive guidance molecule (RGM) family. In terms of assembly, interacts with NEO1, BMP2 and BMP4. Post-translationally, autocatalytically cleaved at low pH; the two chains remain linked via two disulfide bonds. As to expression, expressed in gradient in periventricular layers of the developing nervous system. In adult, expressed in scattered cells throughout the brain.

Its subcellular location is the cell membrane. Member of the repulsive guidance molecule (RGM) family that performs several functions in the developing and adult nervous system. Regulates cephalic neural tube closure, inhibits neurite outgrowth and cortical neuron branching, and the formation of mature synapses. Binding to its receptor NEO1/neogenin induces activation of RHOA-ROCK1/Rho-kinase signaling pathway through UNC5B-ARHGEF12/LARG-PTK2/FAK1 cascade, leading to collapse of the neuronal growth cone and neurite outgrowth inhibition. Furthermore, RGMA binding to NEO1/neogenin leads to HRAS inactivation by influencing HRAS-PTK2/FAK1-AKT1 pathway. It also functions as a bone morphogenetic protein (BMP) coreceptor that may signal through SMAD1, SMAD5, and SMAD8. This Mus musculus (Mouse) protein is Repulsive guidance molecule A (Rgma).